A 361-amino-acid chain; its full sequence is Mannonate dehydratase 1 (361 aa).

Belongs to the mannonate dehydratase family. Fe(2+) is required as a cofactor. Mn(2+) serves as cofactor.

The catalysed reaction is D-mannonate = 2-dehydro-3-deoxy-D-gluconate + H2O. It participates in carbohydrate metabolism; pentose and glucuronate interconversion. In terms of biological role, catalyzes the dehydration of D-mannonate. The protein is Mannonate dehydratase 1 (uxuA1) of Halalkalibacterium halodurans (strain ATCC BAA-125 / DSM 18197 / FERM 7344 / JCM 9153 / C-125) (Bacillus halodurans).